The chain runs to 157 residues: Probable Brix domain-containing ribosomal biogenesis protein (157 aa).

Residues 1–157 enclose the Brix domain; it reads MLVTSSRKPS…KLNLRGFKKY (157 aa).

Its function is as follows. Probably involved in the biogenesis of the ribosome. In Methanosarcina barkeri (strain Fusaro / DSM 804), this protein is Probable Brix domain-containing ribosomal biogenesis protein.